The chain runs to 412 residues: Multifunctional CCA protein (412 aa).

ATP-binding residues include G8 and R11. Residues G8 and R11 each coordinate CTP. Mg(2+) is bound by residues D21 and D23. R91, R137, and R140 together coordinate ATP. Positions 91, 137, and 140 each coordinate CTP. An HD domain is found at 228-329; it reads TGIHTLMTLS…VKLFDSIDAW (102 aa).

It belongs to the tRNA nucleotidyltransferase/poly(A) polymerase family. Bacterial CCA-adding enzyme type 1 subfamily. Monomer. Can also form homodimers and oligomers. Mg(2+) serves as cofactor. It depends on Ni(2+) as a cofactor.

It carries out the reaction a tRNA precursor + 2 CTP + ATP = a tRNA with a 3' CCA end + 3 diphosphate. The catalysed reaction is a tRNA with a 3' CCA end + 2 CTP + ATP = a tRNA with a 3' CCACCA end + 3 diphosphate. Functionally, catalyzes the addition and repair of the essential 3'-terminal CCA sequence in tRNAs without using a nucleic acid template. Adds these three nucleotides in the order of C, C, and A to the tRNA nucleotide-73, using CTP and ATP as substrates and producing inorganic pyrophosphate. tRNA 3'-terminal CCA addition is required both for tRNA processing and repair. Also involved in tRNA surveillance by mediating tandem CCA addition to generate a CCACCA at the 3' terminus of unstable tRNAs. While stable tRNAs receive only 3'-terminal CCA, unstable tRNAs are marked with CCACCA and rapidly degraded. In Escherichia coli O6:K15:H31 (strain 536 / UPEC), this protein is Multifunctional CCA protein.